A 230-amino-acid polypeptide reads, in one-letter code: 7-cyano-7-deazaguanine synthase (230 aa).

Residue 16 to 26 (LSGGLDSATVV) coordinates ATP. Zn(2+) contacts are provided by Cys-195, Cys-205, Cys-208, and Cys-211.

The protein belongs to the QueC family. Requires Zn(2+) as cofactor.

It carries out the reaction 7-carboxy-7-deazaguanine + NH4(+) + ATP = 7-cyano-7-deazaguanine + ADP + phosphate + H2O + H(+). The protein operates within purine metabolism; 7-cyano-7-deazaguanine biosynthesis. Its function is as follows. Catalyzes the ATP-dependent conversion of 7-carboxy-7-deazaguanine (CDG) to 7-cyano-7-deazaguanine (preQ(0)). This Pseudomonas fluorescens (strain Pf0-1) protein is 7-cyano-7-deazaguanine synthase.